An 872-amino-acid chain; its full sequence is Leucine--tRNA ligase (872 aa).

Positions 56 to 66 (PYPSGNLHMGH) match the 'HIGH' region motif. The 'KMSKS' region signature appears at 629–633 (KMSKS). Lys632 provides a ligand contact to ATP.

It belongs to the class-I aminoacyl-tRNA synthetase family.

It is found in the cytoplasm. It catalyses the reaction tRNA(Leu) + L-leucine + ATP = L-leucyl-tRNA(Leu) + AMP + diphosphate. The protein is Leucine--tRNA ligase of Prochlorococcus marinus (strain MIT 9211).